We begin with the raw amino-acid sequence, 170 residues long: Arginine repressor (170 aa).

This sequence belongs to the ArgR family.

It localises to the cytoplasm. It functions in the pathway amino-acid biosynthesis; L-arginine biosynthesis [regulation]. Regulates arginine biosynthesis genes. This chain is Arginine repressor, found in Bifidobacterium longum (strain NCC 2705).